Consider the following 496-residue polypeptide: L-arabinose isomerase (496 aa).

Mn(2+) contacts are provided by glutamate 302, glutamate 329, histidine 346, and histidine 445.

The protein belongs to the arabinose isomerase family. The cofactor is Mn(2+).

It catalyses the reaction beta-L-arabinopyranose = L-ribulose. It participates in carbohydrate degradation; L-arabinose degradation via L-ribulose; D-xylulose 5-phosphate from L-arabinose (bacterial route): step 1/3. Its function is as follows. Catalyzes the conversion of L-arabinose to L-ribulose. In Thermotoga maritima (strain ATCC 43589 / DSM 3109 / JCM 10099 / NBRC 100826 / MSB8), this protein is L-arabinose isomerase.